The sequence spans 67 residues: uncharacterized protein (67 aa).

Residues 4-24 (WIFAILMLGVAIVLSIIATFF) form a helical membrane-spanning segment.

It localises to the membrane. This is an uncharacterized protein from Bacillus anthracis.